Reading from the N-terminus, the 425-residue chain is CinA-like protein (425 aa).

The protein belongs to the CinA family.

The polypeptide is CinA-like protein (Mycobacterium marinum (strain ATCC BAA-535 / M)).